Consider the following 218-residue polypeptide: Deoxyribose-phosphate aldolase (218 aa).

The active-site Proton donor/acceptor is aspartate 89. The active-site Schiff-base intermediate with acetaldehyde is the lysine 152. Lysine 182 functions as the Proton donor/acceptor in the catalytic mechanism.

Belongs to the DeoC/FbaB aldolase family. DeoC type 1 subfamily.

It localises to the cytoplasm. The enzyme catalyses 2-deoxy-D-ribose 5-phosphate = D-glyceraldehyde 3-phosphate + acetaldehyde. It functions in the pathway carbohydrate degradation; 2-deoxy-D-ribose 1-phosphate degradation; D-glyceraldehyde 3-phosphate and acetaldehyde from 2-deoxy-alpha-D-ribose 1-phosphate: step 2/2. Catalyzes a reversible aldol reaction between acetaldehyde and D-glyceraldehyde 3-phosphate to generate 2-deoxy-D-ribose 5-phosphate. This chain is Deoxyribose-phosphate aldolase, found in Corynebacterium diphtheriae (strain ATCC 700971 / NCTC 13129 / Biotype gravis).